A 1405-amino-acid polypeptide reads, in one-letter code: DNA-directed RNA polymerase subunit beta' (1405 aa).

Residues Cys-70, Cys-72, Cys-85, and Cys-88 each contribute to the Zn(2+) site. Mg(2+)-binding residues include Asp-460, Asp-462, and Asp-464. Residues Cys-814, Cys-888, Cys-895, and Cys-898 each contribute to the Zn(2+) site.

It belongs to the RNA polymerase beta' chain family. In terms of assembly, the RNAP catalytic core consists of 2 alpha, 1 beta, 1 beta' and 1 omega subunit. When a sigma factor is associated with the core the holoenzyme is formed, which can initiate transcription. Requires Mg(2+) as cofactor. The cofactor is Zn(2+).

The catalysed reaction is RNA(n) + a ribonucleoside 5'-triphosphate = RNA(n+1) + diphosphate. In terms of biological role, DNA-dependent RNA polymerase catalyzes the transcription of DNA into RNA using the four ribonucleoside triphosphates as substrates. The polypeptide is DNA-directed RNA polymerase subunit beta' (Shewanella sp. (strain ANA-3)).